The sequence spans 283 residues: Pyridoxal kinase PdxY (283 aa).

Ser-8 provides a ligand contact to substrate. ATP contacts are provided by Asp-110 and Glu-147. Asp-219 contributes to the substrate binding site.

This sequence belongs to the pyridoxine kinase family. PdxY subfamily. In terms of assembly, homodimer. Mg(2+) serves as cofactor.

The catalysed reaction is pyridoxal + ATP = pyridoxal 5'-phosphate + ADP + H(+). Its pathway is cofactor metabolism; pyridoxal 5'-phosphate salvage; pyridoxal 5'-phosphate from pyridoxal: step 1/1. In terms of biological role, pyridoxal kinase involved in the salvage pathway of pyridoxal 5'-phosphate (PLP). Catalyzes the phosphorylation of pyridoxal to PLP. This is Pyridoxal kinase PdxY from Corynebacterium diphtheriae (strain ATCC 700971 / NCTC 13129 / Biotype gravis).